A 93-amino-acid chain; its full sequence is Probable endoribonuclease MazF1 (93 aa).

Belongs to the PemK/MazF family. Forms a complex with cognate antitoxin MazE1.

Toxic component of a type II toxin-antitoxin (TA) system, its cognate antitoxin is MazE1. Probably an endoribonuclease. The chain is Probable endoribonuclease MazF1 (mazF1) from Mycobacterium tuberculosis (strain ATCC 25618 / H37Rv).